We begin with the raw amino-acid sequence, 288 residues long: Quinate/shikimate dehydrogenase (288 aa).

The substrate site is built by lysine 71 and aspartate 107. Residues 132–135, 155–158, lysine 205, 232–235, and glycine 255 contribute to the NAD(+) site; these read AGGA, NRRD, and CVYN.

This sequence belongs to the shikimate dehydrogenase family. Homodimer.

The catalysed reaction is L-quinate + NAD(+) = 3-dehydroquinate + NADH + H(+). It catalyses the reaction L-quinate + NADP(+) = 3-dehydroquinate + NADPH + H(+). It carries out the reaction shikimate + NADP(+) = 3-dehydroshikimate + NADPH + H(+). The enzyme catalyses shikimate + NAD(+) = 3-dehydroshikimate + NADH + H(+). The protein operates within metabolic intermediate biosynthesis; chorismate biosynthesis; chorismate from D-erythrose 4-phosphate and phosphoenolpyruvate: step 4/7. In terms of biological role, the actual biological function of YdiB remains unclear, nor is it known whether 3-dehydroshikimate or quinate represents the natural substrate. Catalyzes the reversible NAD-dependent reduction of both 3-dehydroshikimate (DHSA) and 3-dehydroquinate to yield shikimate (SA) and quinate, respectively. It can use both NAD or NADP for catalysis, however it has higher catalytic efficiency with NAD. The polypeptide is Quinate/shikimate dehydrogenase (Shigella sonnei (strain Ss046)).